Consider the following 638-residue polypeptide: Neuroendocrine convertase 2 (638 aa).

A signal peptide spans 1-25; sequence MRGGCISQGKAAAGLLFCVMVFASA. The propeptide occupies 26–109; that stretch reads ERPVFTNHFL…QQEGFNRKKR (84 aa). The region spanning 129–453 is the Peptidase S8 domain; the sequence is QWYLINTGQA…YGVLDAGAMV (325 aa). Catalysis depends on charge relay system residues Asp-167 and His-208. 2 disulfides stabilise this stretch: Cys-225–Cys-376 and Cys-317–Cys-347. N-linked (GlcNAc...) asparagine glycosylation is present at Asn-375. The active-site Charge relay system is Ser-384. The region spanning 461-597 is the P/Homo B domain; the sequence is TVPERFHCVG…TLMLHGTQSA (137 aa). A disulfide bridge links Cys-468 with Cys-494. 2 N-linked (GlcNAc...) asparagine glycosylation sites follow: Asn-514 and Asn-524.

This sequence belongs to the peptidase S8 family. Furin subfamily.

It localises to the cytoplasmic vesicle. It is found in the secretory vesicle. Its subcellular location is the secreted. The catalysed reaction is Release of protein hormones and neuropeptides from their precursors, generally by hydrolysis of -Lys-Arg-|- bonds.. Serine endopeptidase which is involved in the processing of hormone and other protein precursors at sites comprised of pairs of basic amino acid residues. Responsible for the release of glucagon from proglucagon in pancreatic A cells. This chain is Neuroendocrine convertase 2 (PCSK2), found in Bos taurus (Bovine).